The primary structure comprises 282 residues: Glutamate racemase (282 aa).

Substrate contacts are provided by residues 13–14 and 45–46; these read DS and YG. Cysteine 76 serves as the catalytic Proton donor/acceptor. 77–78 is a substrate binding site; it reads NT. The active-site Proton donor/acceptor is the cysteine 186. 187–188 is a substrate binding site; the sequence is TH.

It belongs to the aspartate/glutamate racemases family.

It carries out the reaction L-glutamate = D-glutamate. The protein operates within cell wall biogenesis; peptidoglycan biosynthesis. Provides the (R)-glutamate required for cell wall biosynthesis. In Ralstonia pickettii (strain 12J), this protein is Glutamate racemase.